Here is a 288-residue protein sequence, read N- to C-terminus: Elongation factor Ts (288 aa).

Residues 82–85 are involved in Mg(2+) ion dislocation from EF-Tu; it reads TDFV.

Belongs to the EF-Ts family.

It localises to the cytoplasm. Associates with the EF-Tu.GDP complex and induces the exchange of GDP to GTP. It remains bound to the aminoacyl-tRNA.EF-Tu.GTP complex up to the GTP hydrolysis stage on the ribosome. In Pelodictyon phaeoclathratiforme (strain DSM 5477 / BU-1), this protein is Elongation factor Ts.